The following is a 362-amino-acid chain: Dihydroorotate dehydrogenase (quinone) (362 aa).

Residues 62–66 (AGYDK) and threonine 86 contribute to the FMN site. Residue lysine 66 participates in substrate binding. Position 111-115 (111-115 (NRLGF)) interacts with substrate. FMN is bound by residues asparagine 139 and asparagine 170. Residue asparagine 170 participates in substrate binding. The Nucleophile role is filled by serine 173. Asparagine 175 is a binding site for substrate. FMN contacts are provided by lysine 215 and serine 243. A substrate-binding site is contributed by 244–245 (NT). FMN is bound by residues glycine 266, glycine 295, and 316–317 (YS).

Belongs to the dihydroorotate dehydrogenase family. Type 2 subfamily. As to quaternary structure, monomer. The cofactor is FMN.

Its subcellular location is the cell membrane. The catalysed reaction is (S)-dihydroorotate + a quinone = orotate + a quinol. It participates in pyrimidine metabolism; UMP biosynthesis via de novo pathway; orotate from (S)-dihydroorotate (quinone route): step 1/1. In terms of biological role, catalyzes the conversion of dihydroorotate to orotate with quinone as electron acceptor. In Sinorhizobium medicae (strain WSM419) (Ensifer medicae), this protein is Dihydroorotate dehydrogenase (quinone).